The chain runs to 498 residues: Lysine--tRNA ligase (498 aa).

The Mg(2+) site is built by glutamate 401 and glutamate 408.

It belongs to the class-II aminoacyl-tRNA synthetase family. Homodimer. The cofactor is Mg(2+).

Its subcellular location is the cytoplasm. It carries out the reaction tRNA(Lys) + L-lysine + ATP = L-lysyl-tRNA(Lys) + AMP + diphosphate. The sequence is that of Lysine--tRNA ligase from Dehalococcoides mccartyi (strain ATCC BAA-2266 / KCTC 15142 / 195) (Dehalococcoides ethenogenes (strain 195)).